The primary structure comprises 438 residues: MARFFQPKKKLQPESKHQQVLVEKLDHQGAGIAYLNKKPLFIDGTLPGEEVVTQLTESKSKFARGKLIKLLKPAAERVEPFCSHFNQCGGCDMQHMDYQAQLAYKQRTLLQLMKKFSGSEILLSPPVTGLEKAYRRRARVSLMWDKKSRQLQFGFRRKQSKQIENVTQCPVLVAELECLLPELKAILSHFQHPEHLGHVELVAADNGAVITLRHTGPLLDEDVAKLRQCAEQHQATLYLMPASDQLERISGEAPYYQEIGFKVPFEPNNFIQVNQKVNQQMVVQALEWLDPQSSDRVLDLFCGLGNFSLPIASKAKSVTGVEGVDEMVQKAAINASLNQINNAQFFHANLEQDFVGQPWASEKFDKILLDPARAGASGIIEQVSALGAKRVVYVSCNPATLARDSQSLLEQGYRLTKLGMLDMFPYTSHLESMALFEK.

The 59-residue stretch at 11–69 (LQPESKHQQVLVEKLDHQGAGIAYLNKKPLFIDGTLPGEEVVTQLTESKSKFARGKLIK) folds into the TRAM domain. [4Fe-4S] cluster contacts are provided by cysteine 82, cysteine 88, cysteine 91, and cysteine 169. S-adenosyl-L-methionine is bound by residues glutamine 272, phenylalanine 301, asparagine 306, glutamate 322, asparagine 349, and aspartate 370. The active-site Nucleophile is cysteine 396.

The protein belongs to the class I-like SAM-binding methyltransferase superfamily. RNA M5U methyltransferase family. RlmD subfamily.

It catalyses the reaction uridine(1939) in 23S rRNA + S-adenosyl-L-methionine = 5-methyluridine(1939) in 23S rRNA + S-adenosyl-L-homocysteine + H(+). Functionally, catalyzes the formation of 5-methyl-uridine at position 1939 (m5U1939) in 23S rRNA. The sequence is that of 23S rRNA (uracil(1939)-C(5))-methyltransferase RlmD from Vibrio vulnificus (strain CMCP6).